Here is a 952-residue protein sequence, read N- to C-terminus: Translation initiation factor IF-2 (952 aa).

4 disordered regions span residues 74 to 95 (QRRL…RQLK), 153 to 204 (AAQA…KEEP), 230 to 256 (MHSP…EQAD), and 273 to 319 (DEKG…DVND). The span at 153–168 (AAQADQTDQTDQTDQA) shows a compositional bias: low complexity. Over residues 232-242 (SPFDRSSEAER) the composition is skewed to basic and acidic residues. The span at 286-303 (PGETNAATPAGTASTAGA) shows a compositional bias: low complexity. One can recognise a tr-type G domain in the interval 449 to 619 (IRPPVITIMG…LAEAEIRELK (171 aa)). Residues 458–465 (GHVDHGKT) are G1. 458–465 (GHVDHGKT) is a binding site for GTP. The tract at residues 483 to 487 (GITQH) is G2. The tract at residues 505–508 (DTPG) is G3. GTP contacts are provided by residues 505–509 (DTPGH) and 559–562 (NKVD). The tract at residues 559–562 (NKVD) is G4. Residues 595-597 (SAK) form a G5 region.

It belongs to the TRAFAC class translation factor GTPase superfamily. Classic translation factor GTPase family. IF-2 subfamily.

It is found in the cytoplasm. One of the essential components for the initiation of protein synthesis. Protects formylmethionyl-tRNA from spontaneous hydrolysis and promotes its binding to the 30S ribosomal subunits. Also involved in the hydrolysis of GTP during the formation of the 70S ribosomal complex. In Chlorobium limicola (strain DSM 245 / NBRC 103803 / 6330), this protein is Translation initiation factor IF-2.